A 156-amino-acid chain; its full sequence is MPRKGHIVKRDVLPDPIYNSKLITRIVNTIMEDGKKGTAQGILYGALNRIKDQTGREAIDVFNEALNNISPILEVRARRIGGQNYQVPVEVRPERRQALALRWLVQYAKKRNEKTMEERLAKEILDASQGTGAAVKKREEVHKMAEANKAFAHYRW.

It belongs to the universal ribosomal protein uS7 family. As to quaternary structure, part of the 30S ribosomal subunit. Contacts proteins S9 and S11.

In terms of biological role, one of the primary rRNA binding proteins, it binds directly to 16S rRNA where it nucleates assembly of the head domain of the 30S subunit. Is located at the subunit interface close to the decoding center, probably blocks exit of the E-site tRNA. The sequence is that of Small ribosomal subunit protein uS7 from Acholeplasma laidlawii (strain PG-8A).